A 344-amino-acid polypeptide reads, in one-letter code: Uroporphyrinogen decarboxylase (344 aa).

Residues 26–30 (RQAGR), phenylalanine 45, aspartate 75, tyrosine 151, serine 206, and histidine 320 each bind substrate.

It belongs to the uroporphyrinogen decarboxylase family. In terms of assembly, homodimer.

The protein resides in the cytoplasm. The catalysed reaction is uroporphyrinogen III + 4 H(+) = coproporphyrinogen III + 4 CO2. It functions in the pathway porphyrin-containing compound metabolism; protoporphyrin-IX biosynthesis; coproporphyrinogen-III from 5-aminolevulinate: step 4/4. Functionally, catalyzes the decarboxylation of four acetate groups of uroporphyrinogen-III to yield coproporphyrinogen-III. This Staphylococcus saprophyticus subsp. saprophyticus (strain ATCC 15305 / DSM 20229 / NCIMB 8711 / NCTC 7292 / S-41) protein is Uroporphyrinogen decarboxylase.